A 560-amino-acid chain; its full sequence is 2-succinylbenzoate--CoA ligase, chloroplastic/peroxisomal (560 aa).

A chloroplast-targeting transit peptide spans 1 to 15 (MANHSRPHICQCLTR). Helical transmembrane passes span 69-89 (LFLEWLLAVALVGGVVAPLNY), 189-209 (GVTISHLAFITQSLAKIAIAG), and 225-245 (IGGLSSAMAMLMVGACHVLLP). The Microbody targeting signal signature appears at 558-560 (SSL).

This sequence belongs to the ATP-dependent AMP-binding enzyme family. MenE subfamily. As to expression, high expression in young leaves and flowers. Not expressed in roots.

Its subcellular location is the plastid. It localises to the chloroplast membrane. The protein localises to the peroxisome membrane. The catalysed reaction is 2-succinylbenzoate + ATP + CoA = 2-succinylbenzoyl-CoA + AMP + diphosphate. Functionally, involved in the biosynthesis of phylloquinone (vitamin K1). Converts 2-succinylbenzoate (OSB) to 2-succinylbenzoyl-CoA (OSB-CoA). The polypeptide is 2-succinylbenzoate--CoA ligase, chloroplastic/peroxisomal (AAE14) (Arabidopsis thaliana (Mouse-ear cress)).